A 368-amino-acid polypeptide reads, in one-letter code: MSTLHSTPRADGFYMPAEWATQTQAWMIWPERPDNWRLGGKPAQAAHAAVAKAIARFEPVTVAVSAAQYENARARLDVPNIRVVEMSSDDAWVRDTGPTFVINASGEVRGVHWGFNAWGGFEGGLYSPWNRDEQVASKVLEIERCQEYRTEGFVLEGGSIHVDGEGTLITTEECLLNHNRNPHLSREEIEAVLREHLAVEQIVWLPDGLYNDETDGHVDNFCCYVRPGEVLLAWTDDPQDPNYPRCQAALQVLENTRDAKGRTFKVHKMPIPGPLYATEEECAGVDAVEGSQERNPSVRLAGSYVNFLIVNGGIIAPSFDDPMDAQAKAILQQLFPEHEVVMVPGRELLLGGGNIHCLTQQQPAPQRI.

Residue Cys357 is the Amidino-cysteine intermediate of the active site.

Belongs to the agmatine deiminase family. As to quaternary structure, homodimer.

It carries out the reaction agmatine + H2O = N-carbamoylputrescine + NH4(+). It functions in the pathway amine and polyamine biosynthesis; putrescine biosynthesis via agmatine pathway; N-carbamoylputrescine from agmatine: step 1/1. Mediates the hydrolysis of agmatine into N-carbamoylputrescine in the arginine decarboxylase (ADC) pathway of putrescine biosynthesis, a basic polyamine. The sequence is that of Agmatine deiminase from Pseudomonas fluorescens (strain ATCC BAA-477 / NRRL B-23932 / Pf-5).